The sequence spans 239 residues: 2,3,4,5-tetrahydropyridine-2,6-dicarboxylate N-acetyltransferase (239 aa).

Belongs to the transferase hexapeptide repeat family. DapH subfamily.

It carries out the reaction (S)-2,3,4,5-tetrahydrodipicolinate + acetyl-CoA + H2O = L-2-acetamido-6-oxoheptanedioate + CoA. It participates in amino-acid biosynthesis; L-lysine biosynthesis via DAP pathway; LL-2,6-diaminopimelate from (S)-tetrahydrodipicolinate (acetylase route): step 1/3. Its function is as follows. Catalyzes the transfer of an acetyl group from acetyl-CoA to tetrahydrodipicolinate. This is 2,3,4,5-tetrahydropyridine-2,6-dicarboxylate N-acetyltransferase from Staphylococcus saprophyticus subsp. saprophyticus (strain ATCC 15305 / DSM 20229 / NCIMB 8711 / NCTC 7292 / S-41).